The chain runs to 480 residues: Gasdermin-C2 (480 aa).

A triggers pyroptosis region spans residues 1–226 (MGYSFDRASK…TCVILPSATK (226 aa)).

Belongs to the gasdermin family. As to quaternary structure, homooligomer; homooligomeric ring-shaped pore complex containing 27-28 subunits when inserted in the membrane. Cleavage by CASP8 relieves autoinhibition by releasing the N-terminal moiety (Gasdermin-C2, N-terminal) that initiates pyroptosis. In terms of processing, palmitoylated.

The protein resides in the cytoplasm. The protein localises to the cytosol. It is found in the cell membrane. With respect to regulation, the full-length protein before cleavage is inactive: intramolecular interactions between N- and C-terminal domains mediate autoinhibition in the absence of activation signal. The intrinsic pyroptosis-inducing activity is carried by the released N-terminal moiety (Gasdermin-C2, N-terminal) following cleavage by caspase CASP8 in response to type-2 immunity following worm infection. In terms of biological role, this form constitutes the precursor of the pore-forming protein: upon cleavage, the released N-terminal moiety (Gasdermin-C2, N-terminal) binds to membranes and forms pores, triggering pyroptosis. Pore-forming protein that causes membrane permeabilization and pyroptosis in response to type-2 immunity. Produced by the cleavage of gasdermin-C2 in response to type-2 immunity following worm infection. After cleavage, moves to the plasma membrane where it strongly binds to membrane inner leaflet lipids. Homooligomerizes within the membrane and forms pores of 10-15 nanometers (nm) of inner diameter, triggering pyroptosis and lytic cell death in enterocytes. The chain is Gasdermin-C2 from Mus musculus (Mouse).